Reading from the N-terminus, the 110-residue chain is U1-lycotoxin-Ls1jj (110 aa).

An N-terminal signal peptide occupies residues 1–20; the sequence is MKFVLLFGVLLVTLFSYSSA. Residues 21–44 constitute a propeptide that is removed on maturation; the sequence is EMLDDFDQADEDELLSLIEKEEAR. 4 disulfide bridges follow: cysteine 47-cysteine 62, cysteine 54-cysteine 71, cysteine 61-cysteine 89, and cysteine 73-cysteine 87.

It belongs to the neurotoxin 19 (CSTX) family. 03 subfamily. Expressed by the venom gland.

Its subcellular location is the secreted. The sequence is that of U1-lycotoxin-Ls1jj from Lycosa singoriensis (Wolf spider).